The following is a 366-amino-acid chain: Galactoside alpha-(1,2)-fucosyltransferase 1 (366 aa).

Topologically, residues 1-8 are cytoplasmic; it reads MWPLSHRH. The chain crosses the membrane as a helical; Signal-anchor for type II membrane protein span at residues 9–25; sequence LCLAFLLVCVLSAISFF. Over 26–366 the chain is Lumenal; it reads LHIHQDSIRH…LSPLWTLAEP (341 aa). 3 N-linked (GlcNAc...) asparagine glycosylation sites follow: Asn-66, Asn-302, and Asn-328.

The protein belongs to the glycosyltransferase 11 family.

It localises to the golgi apparatus. The protein resides in the golgi stack membrane. It catalyses the reaction a beta-D-galactosyl-(1-&gt;4)-N-acetyl-beta-D-glucosaminyl derivative + GDP-beta-L-fucose = an alpha-L-Fuc-(1-&gt;2)-beta-D-Gal-(1-&gt;4)-beta-D-GlcNAc derivative + GDP + H(+). It carries out the reaction a ganglioside GA1 + GDP-beta-L-fucose = a ganglioside Fuc-GA1 + GDP + H(+). The enzyme catalyses a beta-D-Gal-(1-&gt;3)-beta-D-GlcNAc-(1-&gt;3)-beta-D-Gal-(1-&gt;4)-beta-D-Glc-(1&lt;-&gt;1')-Cer(d18:1(4E)) + GDP-beta-L-fucose = alpha-L-fucosyl-(1-&gt;2)- beta-D-galactosyl-(1-&gt;3)-N-acetyl-beta-D-glucosaminyl-(1-&gt;3)-beta-D-galactosyl-(1-&gt;4)-beta-D-glucosyl-(1&lt;-&gt;1')-N-acylsphing-4-enine + GDP + H(+). The catalysed reaction is a neolactoside nLc4Cer(d18:1(4E)) + GDP-beta-L-fucose = a neolactoside IV(2)-alpha-Fuc-nLc4Cer(d18:1(4E)) + GDP + H(+). It catalyses the reaction a ganglioside GM1 + GDP-beta-L-fucose = a ganglioside Fuc-GM1 + GDP + H(+). It carries out the reaction beta-D-galactosyl-(1-&gt;3)-N-acetyl-D-galactosamine + GDP-beta-L-fucose = alpha-L-fucosyl-(1-&gt;2)-beta-D-galactosyl-(1-&gt;3)-N-acetyl-D-galactosamine + GDP + H(+). It participates in protein modification; protein glycosylation. Functionally, catalyzes the transfer of L-fucose, from a guanosine diphosphate-beta-L-fucose, to the terminal galactose residue of glycoconjugates through an alpha(1,2) linkage leading to H antigen synthesis that is an intermediate substrate in the synthesis of ABO blood group antigens. H antigen is essential for maturation of the glomerular layer of the main olfactory bulb, in cell migration and early cell-cell contacts during tumor associated angiogenesis. Preferentially fucosylates soluble lactose and to a lesser extent fucosylates glycolipids gangliosides GA1 and GM1a. In Aotus azarae (Azara's night monkey), this protein is Galactoside alpha-(1,2)-fucosyltransferase 1.